The following is a 300-amino-acid chain: Ribonuclease HIII (300 aa).

Residues 86–300 (RSRIGVDESG…FNEVLGSGNQ (215 aa)) enclose the RNase H type-2 domain. A divalent metal cation contacts are provided by D92, E93, and D196.

The protein belongs to the RNase HII family. RnhC subfamily. Mn(2+) is required as a cofactor. Mg(2+) serves as cofactor.

Its subcellular location is the cytoplasm. The catalysed reaction is Endonucleolytic cleavage to 5'-phosphomonoester.. Functionally, endonuclease that specifically degrades the RNA of RNA-DNA hybrids. This is Ribonuclease HIII from Chlamydia trachomatis serovar A (strain ATCC VR-571B / DSM 19440 / HAR-13).